A 240-amino-acid chain; its full sequence is MEKPKYNRIVLKLSGEALAGEQGNGINPTVIQSIAKQVKEIAELDVEVAVVVGGGNLWRGKTGSDLGMDRATADYMGMLATVMNSLALQDSLETLGIQSRVQTSIEMRQVAEPYIRRKAIRHLEKKRVVIFAAGTGNPYFSTDTTAALRAAEIEADVILMAKNNVDGVYNADPRTDETAVKYEKLSYLDVLKDGLAVMDSTASSLCMDNDIPLIVFSIMEEGNIKRAVLGEQIGTIVRGK.

12–15 is a binding site for ATP; it reads KLSG. The involved in allosteric activation by GTP stretch occupies residues 20-25; it reads GEQGNG. Gly-54 is a binding site for UMP. ATP-binding residues include Gly-55 and Arg-59. UMP is bound by residues Asp-74 and 135–142; that span reads TGNPYFST. ATP is bound by residues Asn-163, Tyr-169, and Asp-172.

It belongs to the UMP kinase family. As to quaternary structure, homohexamer.

Its subcellular location is the cytoplasm. It catalyses the reaction UMP + ATP = UDP + ADP. It participates in pyrimidine metabolism; CTP biosynthesis via de novo pathway; UDP from UMP (UMPK route): step 1/1. Allosterically activated by GTP. Inhibited by UTP. Catalyzes the reversible phosphorylation of UMP to UDP. This Bacillus licheniformis (strain ATCC 14580 / DSM 13 / JCM 2505 / CCUG 7422 / NBRC 12200 / NCIMB 9375 / NCTC 10341 / NRRL NRS-1264 / Gibson 46) protein is Uridylate kinase.